Reading from the N-terminus, the 185-residue chain is Ribosome-recycling factor (185 aa).

Belongs to the RRF family.

The protein resides in the cytoplasm. In terms of biological role, responsible for the release of ribosomes from messenger RNA at the termination of protein biosynthesis. May increase the efficiency of translation by recycling ribosomes from one round of translation to another. In Dichelobacter nodosus (strain VCS1703A), this protein is Ribosome-recycling factor.